Consider the following 136-residue polypeptide: Protein NrdI (136 aa).

Belongs to the NrdI family.

In terms of biological role, probably involved in ribonucleotide reductase function. The protein is Protein NrdI of Salmonella agona (strain SL483).